The chain runs to 65 residues: Weak neurotoxin 8 (65 aa).

5 disulfides stabilise this stretch: cysteine 3–cysteine 24, cysteine 6–cysteine 11, cysteine 17–cysteine 42, cysteine 46–cysteine 57, and cysteine 58–cysteine 63.

It belongs to the three-finger toxin family. Ancestral subfamily. Orphan group II sub-subfamily. Expressed by the venom gland.

It localises to the secreted. Its function is as follows. Binds with low affinity to muscular (alpha-1-beta-1-delta-epsilon/CHRNA1-CHRNB1-CHRND-CHRNE) and very low affinity to neuronal (alpha-7/CHRNA7) nicotinic acetylcholine receptor (nAChR). The protein is Weak neurotoxin 8 of Naja naja (Indian cobra).